The following is a 256-amino-acid chain: 3-dehydroquinate dehydratase (256 aa).

Residues Ser-19, 38 to 40 (EIR), and Arg-68 contribute to the 3-dehydroquinate site. His-122 serves as the catalytic Proton donor/acceptor. The active-site Schiff-base intermediate with substrate is the Lys-147. Residues Arg-185, Thr-204, and Gln-208 each coordinate 3-dehydroquinate.

Belongs to the type-I 3-dehydroquinase family. As to quaternary structure, homodimer.

It carries out the reaction 3-dehydroquinate = 3-dehydroshikimate + H2O. Its pathway is metabolic intermediate biosynthesis; chorismate biosynthesis; chorismate from D-erythrose 4-phosphate and phosphoenolpyruvate: step 3/7. Its function is as follows. Involved in the third step of the chorismate pathway, which leads to the biosynthesis of aromatic amino acids. Catalyzes the cis-dehydration of 3-dehydroquinate (DHQ) and introduces the first double bond of the aromatic ring to yield 3-dehydroshikimate. This Methanospirillum hungatei JF-1 (strain ATCC 27890 / DSM 864 / NBRC 100397 / JF-1) protein is 3-dehydroquinate dehydratase.